The primary structure comprises 1031 residues: Zinc finger protein 445 (1031 aa).

Residues 1–43 (MPPGRWHAAYPAQAQSSRERGRLQTVKKEEEDESYTPVQAARP) are disordered. The segment covering 17–29 (SRERGRLQTVKKE) has biased composition (basic and acidic residues). K28 is covalently cross-linked (Glycyl lysine isopeptide (Lys-Gly) (interchain with G-Cter in SUMO1)). One can recognise an SCAN box domain in the interval 55–137 (RQLFRQLRYH…ALLEELQRDL (83 aa)). The region spanning 234 to 304 (MTFKDVEVTF…NMQAAQPKGN (71 aa)) is the KRAB domain. Residues K317, K374, K375, and K399 each participate in a glycyl lysine isopeptide (Lys-Gly) (interchain with G-Cter in SUMO2) cross-link. 3 C2H2-type zinc fingers span residues 485–507 (FKCS…QRLH), 513–535 (FKCR…EKIH), and 541–563 (YKCD…RETH). K567 is covalently cross-linked (Glycyl lysine isopeptide (Lys-Gly) (interchain with G-Cter in SUMO2)). C2H2-type zinc fingers lie at residues 597-619 (FDCS…QRIH) and 625-647 (YKCT…MRLH). K654 participates in a covalent cross-link: Glycyl lysine isopeptide (Lys-Gly) (interchain with G-Cter in SUMO2). 2 consecutive C2H2-type zinc fingers follow at residues 681–703 (FLCQ…QRIH) and 709–731 (YQCS…KKKH). Glycyl lysine isopeptide (Lys-Gly) (interchain with G-Cter in SUMO2) cross-links involve residues K736 and K758. 5 consecutive C2H2-type zinc fingers follow at residues 762–784 (YKCS…QRVH), 790–812 (YKCR…QRIH), 840–862 (FWCQ…KGIH), 868–890 (YKCN…QRIH), and 896–918 (FKCQ…QRKH). Residues 911–939 (LSSHQRKHTRAAQAERSPPARSSSQDTKL) are disordered. Glycyl lysine isopeptide (Lys-Gly) (interchain with G-Cter in SUMO2) cross-links involve residues K938, K956, and K975. 2 consecutive C2H2-type zinc fingers follow at residues 978 to 1000 (HKCS…KRFH) and 1006 to 1028 (FKCS…MKNH).

It belongs to the krueppel C2H2-type zinc-finger protein family.

It is found in the nucleus. Transcription regulator required to maintain maternal and paternal gene imprinting, a process by which gene expression is restricted in a parent of origin-specific manner by epigenetic modification of genomic DNA and chromatin, including DNA methylation. Acts by controlling DNA methylation during the earliest multicellular stages of development at multiple imprinting control regions (ICRs). Acts together with ZFP57, but seems to be the major factor in human early embryonic imprinting maintenance. In contrast, in mice, ZFP57 plays the predominant role in imprinting maintenance. The protein is Zinc finger protein 445 of Homo sapiens (Human).